The primary structure comprises 369 residues: NAD(P)H-quinone oxidoreductase subunit 1, chloroplastic (369 aa).

Helical transmembrane passes span 29-49 (IWII…VLVI), 97-117 (IWLF…SYLV), 129-149 (LGIG…GLLM), 167-187 (AAQS…ISLL), 205-225 (LLGW…ISSL), 255-275 (FGLF…FVTV), 305-325 (IINA…FLFV), and 348-368 (FLLP…ILLL).

This sequence belongs to the complex I subunit 1 family. NDH is composed of at least 16 different subunits, 5 of which are encoded in the nucleus.

It localises to the plastid. The protein resides in the chloroplast thylakoid membrane. The enzyme catalyses a plastoquinone + NADH + (n+1) H(+)(in) = a plastoquinol + NAD(+) + n H(+)(out). The catalysed reaction is a plastoquinone + NADPH + (n+1) H(+)(in) = a plastoquinol + NADP(+) + n H(+)(out). In terms of biological role, NDH shuttles electrons from NAD(P)H:plastoquinone, via FMN and iron-sulfur (Fe-S) centers, to quinones in the photosynthetic chain and possibly in a chloroplast respiratory chain. The immediate electron acceptor for the enzyme in this species is believed to be plastoquinone. Couples the redox reaction to proton translocation, and thus conserves the redox energy in a proton gradient. The polypeptide is NAD(P)H-quinone oxidoreductase subunit 1, chloroplastic (Angiopteris evecta (Mule's foot fern)).